The primary structure comprises 1121 residues: Pleckstrin homology domain-containing family A member 7 (1121 aa).

2 WW domains span residues 9 to 42 and 54 to 87; these read DTLPEHWSYGVCRDGRVFFINDQLRCTTWLHPRT and SDLPRGWEEGFTEEGASYFIDHNQQTTAFRHPVT. The tract at residues 105–137 is disordered; the sequence is PHMSKQDRNQRPSSMVSETSTAGTASTLEAKPG. The span at 115–131 shows a compositional bias: polar residues; it reads RPSSMVSETSTAGTAST. The 119-residue stretch at 164 to 282 folds into the PH domain; it reads PVVVRGWLHK…WVRAMNQAAQ (119 aa). Positions 299-514 are disordered; that stretch reads QAVPQANHTE…LKMSSEERRA (216 aa). 2 stretches are compositionally biased toward basic and acidic residues: residues 308–356 and 437–446; these read ESCH…EGKR and HWARAQKGDS. A compositionally biased stretch (polar residues) spans 460-475; that stretch reads PGQSLSFPENYQTLPK. Over residues 497-514 the composition is skewed to basic and acidic residues; the sequence is YAQDRASHLKMSSEERRA. S536, S545, S569, S604, S608, and S612 each carry phosphoserine. An interaction with CTNND1 region spans residues 538-696; that stretch reads TAPICLGSPE…AESDTDVKLS (159 aa). Residues 547–632 form a disordered region; the sequence is EFTDQGRSRS…NSSHVDRRSM (86 aa). Positions 567–582 are enriched in pro residues; the sequence is PPSPSDIPPPGPPRVF. The segment covering 589–605 has biased composition (basic and acidic residues); that stretch reads TPAERVTVKPPDQRRSV. A coiled-coil region spans residues 700–801; the sequence is EQDRVLQDLE…LQEQHRRAFF (102 aa). 2 disordered regions span residues 841–876 and 888–971; these read RKTVPLFPHPPVPSLSTSESKPPPQPSPPTSPVRTP and YVPY…ELGQ. Residues S858, S860, and S867 each carry the phosphoserine modification. Pro residues predominate over residues 861 to 871; it reads KPPPQPSPPTS. Residue T870 is modified to Phosphothreonine. Phosphoserine occurs at positions 871, 903, and 907. Residues 933 to 942 are compositionally biased toward pro residues; the sequence is DQPPAVPPLP. Residues 958 to 969 show a composition bias toward basic and acidic residues; that stretch reads RQSDERKRDREL. The residue at position 986 (S986) is a Phosphoserine. 2 disordered regions span residues 1003–1028 and 1082–1121; these read GLVGPESRYQTLPGRGLSGSTSRLQQ and RHQKALVRERKRTLGQGERTGLPSSRYLSRPLPGDLGSVC. Residues 1067 to 1094 adopt a coiled-coil conformation; it reads QRGKMSAEEQLERMKRHQKALVRERKRT. The segment covering 1082–1094 has biased composition (basic residues); sequence RHQKALVRERKRT.

As to quaternary structure, interacts with CAMSAP3 and CTNND1. Interacts (via WW domains) with TSPAN33 (via cytoplasmic domain) and with PDZD11; the interaction with TSPAN33 is dependent on PDZD11 being bound to PLEKHA7 and facilitates the docking of ADAM10 to zonula adherens through interaction of TSPAN33 with ADAM10.

The protein resides in the cell junction. It is found in the adherens junction. It localises to the cytoplasm. Its subcellular location is the cytoskeleton. The protein localises to the microtubule organizing center. The protein resides in the centrosome. In terms of biological role, required for zonula adherens biogenesis and maintenance. Acts via its interaction with CAMSAP3, which anchors microtubules at their minus-ends to zonula adherens, leading to the recruitment of KIFC3 kinesin to the junctional site. Mediates docking of ADAM10 to zonula adherens through a PDZD11-dependent interaction with the ADAM10-binding protein TSPAN33. The polypeptide is Pleckstrin homology domain-containing family A member 7 (PLEKHA7) (Homo sapiens (Human)).